The primary structure comprises 199 residues: Acireductone dioxygenase 1 (199 aa).

The Fe(2+) site is built by histidine 99, histidine 101, glutamate 105, and histidine 144. Histidine 99, histidine 101, glutamate 105, and histidine 144 together coordinate Ni(2+).

This sequence belongs to the acireductone dioxygenase (ARD) family. Fe(2+) serves as cofactor. Ni(2+) is required as a cofactor.

It localises to the cytoplasm. The protein localises to the nucleus. The enzyme catalyses 1,2-dihydroxy-5-(methylsulfanyl)pent-1-en-3-one + O2 = 4-methylsulfanyl-2-oxobutanoate + formate + 2 H(+). It catalyses the reaction 1,2-dihydroxy-5-(methylsulfanyl)pent-1-en-3-one + O2 = 3-(methylsulfanyl)propanoate + CO + formate + 2 H(+). It participates in amino-acid biosynthesis; L-methionine biosynthesis via salvage pathway; L-methionine from S-methyl-5-thio-alpha-D-ribose 1-phosphate: step 5/6. Functionally, catalyzes 2 different reactions between oxygen and the acireductone 1,2-dihydroxy-3-keto-5-methylthiopentene (DHK-MTPene) depending upon the metal bound in the active site. Fe-containing acireductone dioxygenase (Fe-ARD) produces formate and 2-keto-4-methylthiobutyrate (KMTB), the alpha-ketoacid precursor of methionine in the methionine recycle pathway. Ni-containing acireductone dioxygenase (Ni-ARD) produces methylthiopropionate, carbon monoxide and formate, and does not lie on the methionine recycle pathway. This chain is Acireductone dioxygenase 1 (ARD1), found in Oryza sativa subsp. indica (Rice).